The following is a 68-amino-acid chain: MTMDQGLNPKQFFLDDVVLQDTLCSMSNRVNKSVKTGYLFPKDHVPSANIIAVERRGGLSDIGKNTSN.

Its subcellular location is the cytoplasm. The protein localises to the nucleus. Functionally, involved in the MEC1-mediated checkpoint response to DNA damage and replication arrest. This is MEC1-mediated checkpoint protein HUG1 (HUG1) from Saccharomyces cerevisiae (strain ATCC 204508 / S288c) (Baker's yeast).